A 786-amino-acid polypeptide reads, in one-letter code: E3 ubiquitin-protein ligase pub3 (786 aa).

Residues 1–109 (MEQGAKRVRF…RSNREVSLTR (109 aa)) form the C2 domain. Disordered stretches follow at residues 134 to 225 (IRAP…NSNA) and 263 to 306 (TWTR…DSGN). Low complexity predominate over residues 142–193 (SSTTANRTTSTPTTTTARTTRTTPRPTATTNTSNQSTSNSTRNGTSAATSNG). Positions 204 to 213 (HRSSPVTNRQ) are enriched in polar residues. The span at 214–225 (TNNTSALSNSNA) shows a compositional bias: low complexity. The 34-residue stretch at 236–269 (GRLPPGWERRADSLGRTYYVDHNTRTTTWTRPAS) folds into the WW 1 domain. Polar residues-rich tracts occupy residues 263 to 285 (TWTR…QRLN) and 295 to 305 (SNPSLMQSDSG). WW domains lie at 306-339 (NDLP…DPRN) and 364-397 (GPLP…DPRL). The HECT domain occupies 453-786 (SAHDLKKRLM…VENTVGFGNE (334 aa)). Cys-754 (glycyl thioester intermediate) is an active-site residue.

It carries out the reaction S-ubiquitinyl-[E2 ubiquitin-conjugating enzyme]-L-cysteine + [acceptor protein]-L-lysine = [E2 ubiquitin-conjugating enzyme]-L-cysteine + N(6)-ubiquitinyl-[acceptor protein]-L-lysine.. It functions in the pathway protein modification; protein ubiquitination. Its function is as follows. E3 ubiquitin-protein ligase which accepts ubiquitin from an E2 ubiquitin-conjugating enzyme in the form of a thioester and then directly transfers the ubiquitin to targeted substrates. This chain is E3 ubiquitin-protein ligase pub3 (pub3), found in Schizosaccharomyces pombe (strain 972 / ATCC 24843) (Fission yeast).